Consider the following 283-residue polypeptide: MSHASPYENNPLLANLTLGQKTDYIAEYSPQLLQPVPRQLNRDALNLAGNLPFHGEDLWTLYEISWLNNKGKPVVAIGEARIDAGSINLIESKSFKLYLNSFNQTRFADLATVRHTLEQDLSKCAEGAIKVALYPLSEAAHHIGTFPGECIDDLDIVIDEYHFSSDWLEQAGDNHTIVEETLHSHLLKSNCLVTGQPDWGSVVIHYKGPRINREKMLRYLISFRQHNEFHEQCVERIFVDLQRHCQPEKLTVYARYTRRGGLDINPFRSNWETAPANMRLIRQ.

90–92 (IES) contributes to the substrate binding site. An NADPH-binding site is contributed by 92–93 (SK). Cys-191 serves as the catalytic Thioimide intermediate. The active-site Proton donor is Asp-198. Residue 230 to 231 (HE) participates in substrate binding. 259 to 260 (RG) serves as a coordination point for NADPH.

It belongs to the GTP cyclohydrolase I family. QueF type 2 subfamily. As to quaternary structure, homodimer.

It localises to the cytoplasm. The enzyme catalyses 7-aminomethyl-7-carbaguanine + 2 NADP(+) = 7-cyano-7-deazaguanine + 2 NADPH + 3 H(+). Its pathway is tRNA modification; tRNA-queuosine biosynthesis. Its function is as follows. Catalyzes the NADPH-dependent reduction of 7-cyano-7-deazaguanine (preQ0) to 7-aminomethyl-7-deazaguanine (preQ1). This is NADPH-dependent 7-cyano-7-deazaguanine reductase from Tolumonas auensis (strain DSM 9187 / NBRC 110442 / TA 4).